A 98-amino-acid polypeptide reads, in one-letter code: Small ribosomal subunit protein uS17 (98 aa).

This sequence belongs to the universal ribosomal protein uS17 family. As to quaternary structure, part of the 30S ribosomal subunit.

Its function is as follows. One of the primary rRNA binding proteins, it binds specifically to the 5'-end of 16S ribosomal RNA. This is Small ribosomal subunit protein uS17 from Synechococcus sp. (strain CC9605).